The sequence spans 512 residues: ATP synthase subunit alpha, chloroplastic (512 aa).

Residue 170 to 177 (GDRQTGKT) participates in ATP binding.

The protein belongs to the ATPase alpha/beta chains family. As to quaternary structure, F-type ATPases have 2 components, CF(1) - the catalytic core - and CF(0) - the membrane proton channel. CF(1) has five subunits: alpha(3), beta(3), gamma(1), delta(1), epsilon(1). CF(0) has four main subunits: a, b, b' and c.

The protein resides in the plastid. The protein localises to the chloroplast thylakoid membrane. It carries out the reaction ATP + H2O + 4 H(+)(in) = ADP + phosphate + 5 H(+)(out). In terms of biological role, produces ATP from ADP in the presence of a proton gradient across the membrane. The alpha chain is a regulatory subunit. This chain is ATP synthase subunit alpha, chloroplastic, found in Chaetosphaeridium globosum (Charophycean green alga).